The following is a 249-amino-acid chain: Probable septum site-determining protein MinC (249 aa).

Positions 89–130 (SLFEPGMPPAMKGGRPAPDFEVPEVDPADPPKAGKGKAAAPI) are disordered. Residues 119–129 (PKAGKGKAAAP) show a composition bias toward low complexity.

Belongs to the MinC family. In terms of assembly, interacts with MinD and FtsZ.

Functionally, cell division inhibitor that blocks the formation of polar Z ring septums. Rapidly oscillates between the poles of the cell to destabilize FtsZ filaments that have formed before they mature into polar Z rings. Prevents FtsZ polymerization. This chain is Probable septum site-determining protein MinC, found in Rhizobium meliloti (strain 1021) (Ensifer meliloti).